A 241-amino-acid polypeptide reads, in one-letter code: GTP cyclohydrolase 1 type 2 homolog (241 aa).

Residues H62, H63, D101, H207, and E211 each coordinate a divalent metal cation.

The protein belongs to the GTP cyclohydrolase I type 2/NIF3 family. Homohexamer.

The polypeptide is GTP cyclohydrolase 1 type 2 homolog (Campylobacter jejuni subsp. jejuni serotype O:2 (strain ATCC 700819 / NCTC 11168)).